Consider the following 78-residue polypeptide: Surfactant-associated protein 2 (78 aa).

Positions Met-1–Gly-19 are cleaved as a signal peptide. Residue Asn-37 is glycosylated (N-linked (GlcNAc...) asparagine).

Post-translationally, N-glycosylated.

It is found in the secreted. It localises to the cytoplasmic vesicle. Its subcellular location is the secretory vesicle. The protein localises to the golgi apparatus. In terms of biological role, putative surfactant protein. The chain is Surfactant-associated protein 2 (SFTA2) from Bos taurus (Bovine).